Consider the following 329-residue polypeptide: Biotin synthase (329 aa).

In terms of domain architecture, Radical SAM core spans 48–278 (FVGDKVFLCS…TKRISICGGR (231 aa)). Residues Cys66, Cys70, and Cys73 each contribute to the [4Fe-4S] cluster site. Ser143 and Cys203 together coordinate [2Fe-2S] cluster.

It belongs to the radical SAM superfamily. Biotin synthase family. As to quaternary structure, homodimer. The cofactor is [4Fe-4S] cluster. [2Fe-2S] cluster is required as a cofactor.

The catalysed reaction is (4R,5S)-dethiobiotin + (sulfur carrier)-SH + 2 reduced [2Fe-2S]-[ferredoxin] + 2 S-adenosyl-L-methionine = (sulfur carrier)-H + biotin + 2 5'-deoxyadenosine + 2 L-methionine + 2 oxidized [2Fe-2S]-[ferredoxin]. It participates in cofactor biosynthesis; biotin biosynthesis; biotin from 7,8-diaminononanoate: step 2/2. Functionally, catalyzes the conversion of dethiobiotin (DTB) to biotin by the insertion of a sulfur atom into dethiobiotin via a radical-based mechanism. This Geotalea daltonii (strain DSM 22248 / JCM 15807 / FRC-32) (Geobacter daltonii) protein is Biotin synthase.